The primary structure comprises 810 residues: Protein kinase C-binding protein NELL1 (810 aa).

An N-terminal signal peptide occupies residues 1-21 (MPMDLILVVWFCVCTARTVVG). Residues Asn40, Asn53, Asn83, Asn224, Asn294, and Asn372 are each glycosylated (N-linked (GlcNAc...) asparagine). The 164-residue stretch at 64–227 (EREIHAAPHV…TQCPNLNHTC (164 aa)) folds into the Laminin G-like domain. The region spanning 271-332 (KTCQVSGLLY…IAGQCCKVCR (62 aa)) is the VWFC 1 domain. 3 cysteine pairs are disulfide-bonded: Cys395–Cys407, Cys401–Cys416, and Cys418–Cys432. Residues Asp434, Ile435, and Glu437 each contribute to the Ca(2+) site. In terms of domain architecture, EGF-like 1; calcium-binding spans 434 to 475 (DIDECAAKMHYCHANTVCVNLPGLYRCDCVPGYIRVDDFSCT). 15 disulfide bridges follow: Cys438–Cys451, Cys445–Cys460, Cys462–Cys474, Cys480–Cys493, Cys487–Cys502, Cys504–Cys515, Cys519–Cys529, Cys523–Cys535, Cys537–Cys546, Cys553–Cys566, Cys560–Cys575, Cys577–Cys594, Cys600–Cys613, Cys607–Cys622, and Cys624–Cys630. Ca(2+)-binding residues include Asn453, Leu454, and Leu457. The EGF-like 2; calcium-binding domain occupies 476-516 (EHDECGSGQHNCDENAICTNTVQGHSCTCKPGYVGNGTICR). N-linked (GlcNAc...) asparagine glycosylation is present at Asn511. The EGF-like 3 domain occupies 517–547 (AFCEEGCRYGGTCVAPNKCVCPSGFTGSHCE). The EGF-like 4; calcium-binding domain occupies 549–587 (DIDECSEGIIECHNHSRCVNLPGWYHCECRSGFHDDGTY). A glycan (N-linked (GlcNAc...) asparagine) is linked at Asn562. An EGF-like 5; calcium-binding domain is found at 596-631 (DIDECALRTHTCWNDSACINLAGGFDCLCPSGPSCS). The N-linked (GlcNAc...) asparagine glycan is linked to Asn609. The region spanning 692–750 (SQCLDQNGHKLYRSGDNWTHSCQQCRCLEGEVDCWPLTCPNLSCEYTAILEGECCPRCV) is the VWFC 2 domain. Asn708, Asn732, and Asn758 each carry an N-linked (GlcNAc...) asparagine glycan.

Homotrimer. Binds to PKC beta-1. Interacts with ATRAID; the interaction promotes osteoblast cell differentiation and mineralization. Interacts with ROBO3.

It is found in the cytoplasm. The protein resides in the nucleus envelope. The protein localises to the secreted. Its function is as follows. Plays a role in the control of cell growth and differentiation. Promotes osteoblast cell differentiation and terminal mineralization. This chain is Protein kinase C-binding protein NELL1 (NELL1), found in Homo sapiens (Human).